The following is a 344-amino-acid chain: 3,4-dihydroxy-2-butanone 4-phosphate synthase (344 aa).

A DHBP synthase region spans residues 1–202; it reads MILKRVTEAL…VSDLISYRLE (202 aa). Residues 27-28, aspartate 32, 139-143, and glutamate 163 each bind D-ribulose 5-phosphate; these read RE and RTGHT. Position 28 (glutamate 28) interacts with Mg(2+). Mg(2+) is bound at residue histidine 142. Positions 203-344 are GTP cyclohydrolase II-like; the sequence is NESLLKMFCQ…GLKLVETISL (142 aa).

In the N-terminal section; belongs to the DHBP synthase family. It in the C-terminal section; belongs to the GTP cyclohydrolase II family. Mg(2+) serves as cofactor. Requires Mn(2+) as cofactor.

It catalyses the reaction D-ribulose 5-phosphate = (2S)-2-hydroxy-3-oxobutyl phosphate + formate + H(+). Its pathway is cofactor biosynthesis; riboflavin biosynthesis; 2-hydroxy-3-oxobutyl phosphate from D-ribulose 5-phosphate: step 1/1. Its function is as follows. Catalyzes the conversion of D-ribulose 5-phosphate to formate and 3,4-dihydroxy-2-butanone 4-phosphate. This chain is 3,4-dihydroxy-2-butanone 4-phosphate synthase (ribB), found in Helicobacter pylori (strain ATCC 700392 / 26695) (Campylobacter pylori).